The following is a 482-amino-acid chain: MEKRTSCSVQTSTNCDNSLETLNSAHQATGAVQMRIKNANSHPDRQSQTKSMILTDAGKVTEPISRHRRNHSQHVLKDVIPPLEHPMVEKEGYLQKAKIADGGKKLRKNWSTSWIVLSGRKLEFYKDPKQQALPNVKPRPNAESVDLCGAHIEWAAKDKSSKKSVFQITTASGNEFLLQSDIDFLILDWFHAIKNAIDRLPKNPSFGSLELFSFQRSSSSEQPSHCHIDRKEQKPENRKSFMFRLHHSVSDTSDKNRVKSRLKKFISRRPSLKTLQEKGIIKDQIFGSHLHTVCEREHSTVPWFVKQCIEAVEKRGLEVDGIYRVSGNLATIQKLRFIVNQEEKLNLDDSQWEDIHVVTGALKMFFRELSEPLFPYSFFERFVEAIKKQDSDAKIETMKSLVKSLPPPNHDTMKILFGHLTKIVAKAAQNLMSTQSLGIVFGPTLLRAENESGNVAVHMVYQNQVAEFMLTEYDKIFSSEED.

Residues S51, S111, S205, S208, and S250 each carry the phosphoserine modification. The 112-residue stretch at 87 to 198 folds into the PH domain; it reads MVEKEGYLQK…WFHAIKNAID (112 aa). Positions 288–477 constitute a Rho-GAP domain; that stretch reads SHLHTVCERE…FMLTEYDKIF (190 aa).

The protein localises to the cytoplasm. Its subcellular location is the membrane. Its function is as follows. GTPase activator for the Rho-type GTPases by converting them to an inactive GDP-bound state. Has activity toward RAC1. Overexpression results in an increase in actin stress fibers and cell contraction. This Rattus norvegicus (Rat) protein is Rho GTPase-activating protein 15 (Arhgap15).